A 269-amino-acid polypeptide reads, in one-letter code: Tryptophan synthase alpha chain (269 aa).

Residues Glu-49 and Asp-60 each act as proton acceptor in the active site.

Belongs to the TrpA family. As to quaternary structure, tetramer of two alpha and two beta chains.

It carries out the reaction (1S,2R)-1-C-(indol-3-yl)glycerol 3-phosphate + L-serine = D-glyceraldehyde 3-phosphate + L-tryptophan + H2O. It functions in the pathway amino-acid biosynthesis; L-tryptophan biosynthesis; L-tryptophan from chorismate: step 5/5. The alpha subunit is responsible for the aldol cleavage of indoleglycerol phosphate to indole and glyceraldehyde 3-phosphate. The chain is Tryptophan synthase alpha chain from Paramagnetospirillum magneticum (strain ATCC 700264 / AMB-1) (Magnetospirillum magneticum).